Reading from the N-terminus, the 381-residue chain is Spindlin interactor and repressor of chromatin-binding protein (381 aa).

The tract at residues Arg-42–Trp-73 is disordered. Residue Lys-48 forms a Glycyl lysine isopeptide (Lys-Gly) (interchain with G-Cter in SUMO2) linkage. A phosphoserine mark is found at Ser-121 and Ser-148. 3 disordered regions span residues Ala-144–His-264, Gln-283–Thr-320, and Leu-339–Val-381. Glycyl lysine isopeptide (Lys-Gly) (interchain with G-Cter in SUMO2) cross-links involve residues Lys-189 and Lys-220. Over residues Arg-218–Val-228 the composition is skewed to basic and acidic residues. Residues Ser-248 and Ser-251 each carry the phosphoserine modification. A compositionally biased stretch (basic and acidic residues) spans Pro-287–Ala-299. Glycyl lysine isopeptide (Lys-Gly) (interchain with G-Cter in SUMO2) cross-links involve residues Lys-290 and Lys-294. 2 positions are modified to phosphoserine: Ser-308 and Ser-310. Lys-374 participates in a covalent cross-link: Glycyl lysine isopeptide (Lys-Gly) (interchain with G-Cter in SUMO2).

As to quaternary structure, interacts with SPIN1, SPIN2A, SPIN2B, SPIN3 and SPIN4. Interacts with TCF7L2 in a SPIN1-dependent manner. Interacts with PARP1; promoting PARP1 ADP-ribosyltransferase activity.

Its subcellular location is the nucleus. It localises to the chromosome. Functionally, chromatin protein that stabilizes SPIN1 and enhances its association with histone H3 trimethylated at both 'Lys-4' and 'Lys-9' (H3K4me3K9me3). Positively regulates poly-ADP-ribosylation in response to DNA damage; acts by facilitating PARP1 ADP-ribosyltransferase activity. This is Spindlin interactor and repressor of chromatin-binding protein from Homo sapiens (Human).